The chain runs to 62 residues: Large ribosomal subunit protein bL28 (62 aa).

The protein belongs to the bacterial ribosomal protein bL28 family.

The polypeptide is Large ribosomal subunit protein bL28 (Helicobacter hepaticus (strain ATCC 51449 / 3B1)).